A 96-amino-acid chain; its full sequence is Small ribosomal subunit protein bS6 (96 aa).

Belongs to the bacterial ribosomal protein bS6 family.

Functionally, binds together with bS18 to 16S ribosomal RNA. The chain is Small ribosomal subunit protein bS6 from Nocardioides sp. (strain ATCC BAA-499 / JS614).